The sequence spans 684 residues: Macrolide export ATP-binding/permease protein MacB (684 aa).

The 242-residue stretch at 2-243 (IQLYGLRKDY…RSRLANSRAE (242 aa)) folds into the ABC transporter domain. 38 to 45 (GSSGSGKT) is a binding site for ATP. The next 5 helical transmembrane spans lie at 248–268 (PASA…VLAL), 275–295 (TVLT…TMEL), 563–583 (LVIA…IMLV), 615–635 (VLCV…SVLV), and 644–664 (AMSI…GIVF).

It belongs to the ABC transporter superfamily. Macrolide exporter (TC 3.A.1.122) family. Homodimer.

It localises to the cell inner membrane. Functionally, non-canonical ABC transporter that contains transmembrane domains (TMD), which form a pore in the inner membrane, and an ATP-binding domain (NBD), which is responsible for energy generation. Confers resistance against macrolides. The sequence is that of Macrolide export ATP-binding/permease protein MacB from Rhodopirellula baltica (strain DSM 10527 / NCIMB 13988 / SH1).